The following is a 283-amino-acid chain: Octanoyl-[GcvH]:protein N-octanoyltransferase (283 aa).

Positions 42-248 (GQSDAVVRTW…TLQSFGGELY (207 aa)) constitute a BPL/LPL catalytic domain. Cysteine 147 acts as the Acyl-thioester intermediate in catalysis.

This sequence belongs to the octanoyltransferase LipL family.

The catalysed reaction is N(6)-octanoyl-L-lysyl-[glycine-cleavage complex H protein] + L-lysyl-[lipoyl-carrier protein] = N(6)-octanoyl-L-lysyl-[lipoyl-carrier protein] + L-lysyl-[glycine-cleavage complex H protein]. The protein operates within protein modification; protein lipoylation via endogenous pathway; protein N(6)-(lipoyl)lysine from octanoyl-[acyl-carrier-protein]. In terms of biological role, catalyzes the amidotransfer (transamidation) of the octanoyl moiety from octanoyl-GcvH to the lipoyl domain of the E2 subunit of lipoate-dependent enzymes. This chain is Octanoyl-[GcvH]:protein N-octanoyltransferase, found in Geobacillus kaustophilus (strain HTA426).